Consider the following 540-residue polypeptide: Chaperonin GroEL (540 aa).

Residues 30–33 (TLGP), K51, 87–91 (DGTTT), G415, and D495 contribute to the ATP site.

It belongs to the chaperonin (HSP60) family. In terms of assembly, forms a cylinder of 14 subunits composed of two heptameric rings stacked back-to-back. Interacts with the co-chaperonin GroES.

The protein resides in the cytoplasm. The enzyme catalyses ATP + H2O + a folded polypeptide = ADP + phosphate + an unfolded polypeptide.. Its function is as follows. Together with its co-chaperonin GroES, plays an essential role in assisting protein folding. The GroEL-GroES system forms a nano-cage that allows encapsulation of the non-native substrate proteins and provides a physical environment optimized to promote and accelerate protein folding. The sequence is that of Chaperonin GroEL from Rhodothermus marinus (Rhodothermus obamensis).